Reading from the N-terminus, the 428-residue chain is Enolase (428 aa).

Gln162 provides a ligand contact to (2R)-2-phosphoglycerate. Residue Glu204 is the Proton donor of the active site. The Mg(2+) site is built by Asp241, Glu283, and Asp310. (2R)-2-phosphoglycerate-binding residues include Lys335, Arg364, Ser365, and Lys386. The active-site Proton acceptor is the Lys335.

The protein belongs to the enolase family. Requires Mg(2+) as cofactor.

Its subcellular location is the cytoplasm. The protein localises to the secreted. It localises to the cell surface. The catalysed reaction is (2R)-2-phosphoglycerate = phosphoenolpyruvate + H2O. The protein operates within carbohydrate degradation; glycolysis; pyruvate from D-glyceraldehyde 3-phosphate: step 4/5. Catalyzes the reversible conversion of 2-phosphoglycerate (2-PG) into phosphoenolpyruvate (PEP). It is essential for the degradation of carbohydrates via glycolysis. In Nocardia farcinica (strain IFM 10152), this protein is Enolase.